The chain runs to 186 residues: MISTKDFRNGLKIEIDGKPYEIVEFQHFKPGKGGAFVRTKLRNMFTGRITDQTFRSGEKVKKPDMATKEMQYLYKDGEDYVLMDLESYEQMNVAADVIATAGGFLKEGETNKALLYNGEVIGIELPASVILEVTQTDPGVQGDRVSNATKPATLETGLGINVPLFINEGDKIKVDTRSSEYLGREK.

Belongs to the elongation factor P family.

The protein localises to the cytoplasm. It participates in protein biosynthesis; polypeptide chain elongation. Involved in peptide bond synthesis. Stimulates efficient translation and peptide-bond synthesis on native or reconstituted 70S ribosomes in vitro. Probably functions indirectly by altering the affinity of the ribosome for aminoacyl-tRNA, thus increasing their reactivity as acceptors for peptidyl transferase. In Maridesulfovibrio salexigens (strain ATCC 14822 / DSM 2638 / NCIMB 8403 / VKM B-1763) (Desulfovibrio salexigens), this protein is Elongation factor P.